Consider the following 393-residue polypeptide: Elongation factor Tu (393 aa).

The tr-type G domain occupies 10–203 (KPHVNIGTIG…AVDAFIPDPV (194 aa)). Residues 19 to 26 (GHVDHGKT) are G1. GTP is bound at residue 19 to 26 (GHVDHGKT). Thr26 provides a ligand contact to Mg(2+). Positions 60–64 (GITIS) are G2. The G3 stretch occupies residues 81–84 (DCPG). Residues 81 to 85 (DCPGH) and 136 to 139 (NKVD) contribute to the GTP site. Residues 136-139 (NKVD) form a G4 region. A G5 region spans residues 173–175 (SAL).

It belongs to the TRAFAC class translation factor GTPase superfamily. Classic translation factor GTPase family. EF-Tu/EF-1A subfamily. Monomer.

Its subcellular location is the cytoplasm. It catalyses the reaction GTP + H2O = GDP + phosphate + H(+). In terms of biological role, GTP hydrolase that promotes the GTP-dependent binding of aminoacyl-tRNA to the A-site of ribosomes during protein biosynthesis. The polypeptide is Elongation factor Tu (Chlorobium chlorochromatii (strain CaD3)).